A 204-amino-acid polypeptide reads, in one-letter code: Inactive ribonuclease-like protein 9 (204 aa).

An N-terminal signal peptide occupies residues 1–26 (MMRTLITTHPLLLLLLLQQLLQPVQL). Intrachain disulfides connect C97–C152, C115–C167, and C122–C129. N-linked (GlcNAc...) asparagine glycosylation is found at N130 and N142.

It belongs to the pancreatic ribonuclease family.

Its subcellular location is the secreted. Does not exhibit any ribonuclease activity. The polypeptide is Inactive ribonuclease-like protein 9 (RNASE9) (Chlorocebus pygerythrus (Vervet monkey)).